The chain runs to 321 residues: uncharacterized protein (321 aa).

Y49 acts as the Proton donor in catalysis. A substrate-binding site is contributed by H106.

Belongs to the aldo/keto reductase family.

This is an uncharacterized protein from Caenorhabditis elegans.